Here is a 482-residue protein sequence, read N- to C-terminus: Auxin transporter-like protein 2 (482 aa).

The Cytoplasmic segment spans residues 1 to 58 (MVPAGDQAEEAIVADAGKEEAEVRAAMGVEQDGKFSMTSLLWHGGSVWDAWFSCASNQ). Residues 59–76 (VAQVLLTLPYSFSQLGML) traverse the membrane as a helical segment. Topologically, residues 77–78 (SG) are extracellular. Residues 79-99 (LLLQVFYGLMGSWTAYLISVL) form a helical membrane-spanning segment. Over 100-134 (YVEYRARKEKEGVSFKNHVIQWFEVLDGLLGPYWK) the chain is Cytoplasmic. A helical membrane pass occupies residues 135–155 (AAGLAFNCTFLLFGSVIQLIA). Over 156–171 (CASNIYYINDRLDKRT) the chain is Extracellular. The chain crosses the membrane as a helical span at residues 172–192 (WTYIFGACCSTTVFIPSFHNY). Residue R193 is a topological domain, cytoplasmic. The chain crosses the membrane as a helical span at residues 194-214 (IWSFLGLGMTTYTAWYLAIAA). At 215-231 (AVHGQVDGVTHSGPSKM) the chain is on the extracellular side. A helical membrane pass occupies residues 232–252 (VLYFTGATNILYTFGGHAVTV). The Cytoplasmic portion of the chain corresponds to 253 to 265 (EIMHAMWKPQKFK). The chain crosses the membrane as a helical span at residues 266–286 (YIYLVATLYVFTLTLPSASAM). At 287–313 (YWAFGDALLTHSNAFSLLPRSGWRDAA) the chain is on the extracellular side. Residues 314-334 (VILMLIHQFITFGFACTPLYF) traverse the membrane as a helical segment. Residues 335 to 355 (VWEKAIGMHGTRSVLTRALAR) lie on the Cytoplasmic side of the membrane. Residues 356 to 376 (LPIVVPIWFLAIIFPFFGPIN) form a helical membrane-spanning segment. Position 377 (S377) is a topological domain, extracellular. A helical transmembrane segment spans residues 378–398 (AVGALLVSFTVYIIPSLSHIL). Residues 399–423 (TYRSASARLNAAEKPPPFLPSWSGM) are Cytoplasmic-facing. Residues 424–444 (FVVNVFVVAWVLVVGFGLGGW) form a helical membrane-spanning segment. The Extracellular segment spans residues 445–482 (ASVTNFIKQIDTFGLFAKCYQCPPRAHAGAPLPAPPRH).

This sequence belongs to the amino acid/polyamine transporter 2 family. Amino acid/auxin permease (AAAP) (TC 2.A.18.1) subfamily.

The protein localises to the cell membrane. Carrier protein involved in proton-driven auxin influx. May mediate the formation of auxin gradient from developing leaves (site of auxin biosynthesis) to tips. The protein is Auxin transporter-like protein 2 of Oryza sativa subsp. japonica (Rice).